Consider the following 517-residue polypeptide: Acetylcholine receptor subunit delta (517 aa).

The first 21 residues, 1–21 (MEGPVLTLGLLAALAVCGSWG), serve as a signal peptide directing secretion. Over 22–245 (LNEEERLIRH…ITFYLIIRRK (224 aa)) the chain is Extracellular. N-linked (GlcNAc...) asparagine glycans are attached at residues N97 and N164. The cysteines at positions 151 and 165 are disulfide-linked. 3 helical membrane passes run 246–270 (PLFY…VFYL), 278–299 (TSVA…SKRL), and 312–333 (FLLF…VLNI). Over 334-471 (HFRTPSTHVL…WNRVARTVDR (138 aa)) the chain is Cytoplasmic. Residue Y390 is modified to Phosphotyrosine; by Tyr-kinases. Residues 472-490 (LCLFVVTPVMVVGTAWIFL) traverse the membrane as a helical segment.

It belongs to the ligand-gated ion channel (TC 1.A.9) family. Acetylcholine receptor (TC 1.A.9.1) subfamily. Delta/CHRND sub-subfamily. In terms of assembly, pentamer of two alpha chains, and one each of the beta, delta, and gamma (in immature muscle) or epsilon (in mature muscle) chains. The muscle heteropentamer composed of alpha-1, beta-1, delta, epsilon subunits interacts with the alpha-conotoxin ImII.

Its subcellular location is the postsynaptic cell membrane. It localises to the cell membrane. The enzyme catalyses K(+)(in) = K(+)(out). It catalyses the reaction Na(+)(in) = Na(+)(out). In terms of biological role, after binding acetylcholine, the AChR responds by an extensive change in conformation that affects all subunits and leads to opening of an ion-conducting channel across the plasma membrane. This chain is Acetylcholine receptor subunit delta, found in Homo sapiens (Human).